The following is a 396-amino-acid chain: Elongation factor Tu (396 aa).

In terms of domain architecture, tr-type G spans 10–206; the sequence is KLHVNVGTIG…ALDTHIPNPE (197 aa). The tract at residues 19–26 is G1; that stretch reads GHVDHGKT. 19–26 is a GTP binding site; it reads GHVDHGKT. Residue Thr26 participates in Mg(2+) binding. Residues 60–64 are G2; sequence GITIS. Residues 81–84 form a G3 region; it reads DCPG. Residues 81–85 and 136–139 contribute to the GTP site; these read DCPGH and NKAD. Residues 136–139 are G4; that stretch reads NKAD. A G5 region spans residues 174–176; the sequence is SAL.

This sequence belongs to the TRAFAC class translation factor GTPase superfamily. Classic translation factor GTPase family. EF-Tu/EF-1A subfamily. Monomer.

The protein localises to the cytoplasm. It carries out the reaction GTP + H2O = GDP + phosphate + H(+). In terms of biological role, GTP hydrolase that promotes the GTP-dependent binding of aminoacyl-tRNA to the A-site of ribosomes during protein biosynthesis. The protein is Elongation factor Tu of Xylella fastidiosa (strain Temecula1 / ATCC 700964).